The chain runs to 332 residues: RNA polymerase principal sigma factor HrdD (332 aa).

Basic residues predominate over residues 1–11; sequence MATRAVARRKS. Residues 1 to 25 form a disordered region; that stretch reads MATRAVARRKSAAGETSGSATSVRA. The span at 13-22 shows a compositional bias: low complexity; sequence AGETSGSATS. Positions 124–137 match the Polymerase core binding motif; it reads DLIQEGNAGLVRAV. Residues 294-313 constitute a DNA-binding region (H-T-H motif); it reads LTEVGKEHGLTRERIRQIEK.

This sequence belongs to the sigma-70 factor family. As to quaternary structure, interacts transiently with the RNA polymerase catalytic core.

Sigma factors are initiation factors that promote the attachment of RNA polymerase to specific initiation sites and are then released. The protein is RNA polymerase principal sigma factor HrdD (hrdD) of Streptomyces coelicolor (strain ATCC BAA-471 / A3(2) / M145).